The sequence spans 61 residues: Photosystem II reaction center protein K (61 aa).

A propeptide spanning residues 1–24 (MPNIFSLICICLNSALQPSGFFFA) is cleaved from the precursor. The chain crosses the membrane as a helical span at residues 36–56 (IVDFMPVIPVLFFLLAFVWQA).

This sequence belongs to the PsbK family. As to quaternary structure, PSII is composed of 1 copy each of membrane proteins PsbA, PsbB, PsbC, PsbD, PsbE, PsbF, PsbH, PsbI, PsbJ, PsbK, PsbL, PsbM, PsbT, PsbX, PsbY, PsbZ, Psb30/Ycf12, at least 3 peripheral proteins of the oxygen-evolving complex and a large number of cofactors. It forms dimeric complexes.

It localises to the plastid. The protein localises to the chloroplast thylakoid membrane. Its function is as follows. One of the components of the core complex of photosystem II (PSII). PSII is a light-driven water:plastoquinone oxidoreductase that uses light energy to abstract electrons from H(2)O, generating O(2) and a proton gradient subsequently used for ATP formation. It consists of a core antenna complex that captures photons, and an electron transfer chain that converts photonic excitation into a charge separation. This chain is Photosystem II reaction center protein K, found in Nymphaea alba (White water-lily).